The sequence spans 628 residues: tRNA uridine 5-carboxymethylaminomethyl modification enzyme MnmG (628 aa).

14-19 (GAGHAG) is a binding site for FAD. Residue 273 to 287 (GPRYCPSIEDKVVRF) participates in NAD(+) binding.

Belongs to the MnmG family. As to quaternary structure, homodimer. Heterotetramer of two MnmE and two MnmG subunits. FAD is required as a cofactor.

It localises to the cytoplasm. Functionally, NAD-binding protein involved in the addition of a carboxymethylaminomethyl (cmnm) group at the wobble position (U34) of certain tRNAs, forming tRNA-cmnm(5)s(2)U34. The protein is tRNA uridine 5-carboxymethylaminomethyl modification enzyme MnmG of Bacillus velezensis (strain DSM 23117 / BGSC 10A6 / LMG 26770 / FZB42) (Bacillus amyloliquefaciens subsp. plantarum).